A 361-amino-acid chain; its full sequence is Histidinol-phosphate aminotransferase (361 aa).

The residue at position 218 (Lys-218) is an N6-(pyridoxal phosphate)lysine.

It belongs to the class-II pyridoxal-phosphate-dependent aminotransferase family. Histidinol-phosphate aminotransferase subfamily. As to quaternary structure, homodimer. The cofactor is pyridoxal 5'-phosphate.

It catalyses the reaction L-histidinol phosphate + 2-oxoglutarate = 3-(imidazol-4-yl)-2-oxopropyl phosphate + L-glutamate. The protein operates within amino-acid biosynthesis; L-histidine biosynthesis; L-histidine from 5-phospho-alpha-D-ribose 1-diphosphate: step 7/9. This chain is Histidinol-phosphate aminotransferase, found in Dinoroseobacter shibae (strain DSM 16493 / NCIMB 14021 / DFL 12).